The chain runs to 296 residues: MEYKFFLSESQMVLKAFYIESAMIAMLTGAKGNIVINGQSIEIESDVTLIIPKYSQVSCNIVCNTVKQPLELHTLSMSAEELQAVFLLLKTLMKSGAPLTSHQPIYHISPPETVRDNFSLLKQCLPLKKQSASQEALLMKQSLYFILMAIYQEGIDILNLFRFNYDEPKNQAITHLITQEPQKKWHLDDVAKALFTTPSTLRRHLNREGVSFRQLLLDVRMGMALNYLTFSNYSVFQISHRCGFGSNAYFCDVFKRKYNMTPSQFRLQSRQSNDPNFITNLSLRSNPIEFDKEIDE.

An HTH araC/xylS-type domain is found at 171 to 268 (QAITHLITQE…NMTPSQFRLQ (98 aa)). 2 consecutive DNA-binding regions (H-T-H motif) follow at residues 188–209 (DDVA…NREG) and 235–258 (VFQI…KRKY).

Functionally, positive regulator of the expression of the urease operon. The polypeptide is Urease operon transcriptional activator (ureR) (Escherichia coli).